Here is a 118-residue protein sequence, read N- to C-terminus: UPF0102 protein Lxx14785 (118 aa).

The protein belongs to the UPF0102 family.

The chain is UPF0102 protein Lxx14785 from Leifsonia xyli subsp. xyli (strain CTCB07).